The chain runs to 428 residues: Gamma-glutamyl phosphate reductase (428 aa).

This sequence belongs to the gamma-glutamyl phosphate reductase family.

Its subcellular location is the cytoplasm. The enzyme catalyses L-glutamate 5-semialdehyde + phosphate + NADP(+) = L-glutamyl 5-phosphate + NADPH + H(+). It functions in the pathway amino-acid biosynthesis; L-proline biosynthesis; L-glutamate 5-semialdehyde from L-glutamate: step 2/2. Catalyzes the NADPH-dependent reduction of L-glutamate 5-phosphate into L-glutamate 5-semialdehyde and phosphate. The product spontaneously undergoes cyclization to form 1-pyrroline-5-carboxylate. The polypeptide is Gamma-glutamyl phosphate reductase (Anaeromyxobacter sp. (strain Fw109-5)).